Consider the following 401-residue polypeptide: Chaperone protein DnaJ (401 aa).

Residues D4 to G69 enclose the J domain. The segment at G156–D237 adopts a CR-type zinc-finger fold. Zn(2+) contacts are provided by C169, C172, C185, C188, C211, C214, C225, and C228. 4 CXXCXGXG motif repeats span residues C169–G176, C185–G192, C211–G218, and C225–G232. Positions A377–S401 are disordered. Positions N385–S401 are enriched in basic and acidic residues.

It belongs to the DnaJ family. In terms of assembly, homodimer. Requires Zn(2+) as cofactor.

The protein localises to the cytoplasm. Participates actively in the response to hyperosmotic and heat shock by preventing the aggregation of stress-denatured proteins and by disaggregating proteins, also in an autonomous, DnaK-independent fashion. Unfolded proteins bind initially to DnaJ; upon interaction with the DnaJ-bound protein, DnaK hydrolyzes its bound ATP, resulting in the formation of a stable complex. GrpE releases ADP from DnaK; ATP binding to DnaK triggers the release of the substrate protein, thus completing the reaction cycle. Several rounds of ATP-dependent interactions between DnaJ, DnaK and GrpE are required for fully efficient folding. Also involved, together with DnaK and GrpE, in the DNA replication of plasmids through activation of initiation proteins. This is Chaperone protein DnaJ from Chlorobium limicola (strain DSM 245 / NBRC 103803 / 6330).